Consider the following 364-residue polypeptide: Pectinesterase (364 aa).

Positions 1–22 (MSCIAVEAVLLGILLYIPIVLS) are cleaved as a signal peptide. N-linked (GlcNAc...) asparagine glycosylation occurs at N103. D220 is a catalytic residue.

The protein localises to the secreted. The enzyme catalyses [(1-&gt;4)-alpha-D-galacturonosyl methyl ester](n) + n H2O = [(1-&gt;4)-alpha-D-galacturonosyl](n) + n methanol + n H(+). The protein operates within glycan metabolism; pectin degradation; 2-dehydro-3-deoxy-D-gluconate from pectin: step 1/5. Catalyzes the demethylesterification of homogalacturonan components of pectin. The chain is Pectinesterase from Parthenium hysterophorus (Santa Maria feverfew).